The following is a 270-amino-acid chain: Karrikin insensitive 2 receptor CA (270 aa).

Catalysis depends on S95, which acts as the Nucleophile. Residues D217 and H246 contribute to the active site.

Belongs to the AB hydrolase superfamily. As to expression, expressed in stigma.

Its subcellular location is the nucleus. The protein resides in the cytoplasm. Hydrolase which may be involved in plant olfaction during volatile communication. This is Karrikin insensitive 2 receptor CA from Petunia hybrida (Petunia).